Reading from the N-terminus, the 390-residue chain is Protein YghO (390 aa).

This chain is Protein YghO (yghO), found in Escherichia coli (strain K12).